A 199-amino-acid polypeptide reads, in one-letter code: MVKVLVLYYSAYGHMEKMAKAAAEGAREGGAEVTIKRVPELVPPDVAKASHYKIDQDAPIATPAELADYDAIIIGTATRYGMMAAQMKNFLDQTGGLWAKGALINKVGSVMVSTATQHGGAELALISTQWQMQHQGMIIVPLSYAYQGQMGNDVVRGGAPYGMTTTADGDGSRQPSEQELDGARFQGKRVAEITAKLNS.

In terms of domain architecture, Flavodoxin-like spans 4 to 190 (VLVLYYSAYG…DGARFQGKRV (187 aa)). FMN-binding positions include 10-15 (SAYGHM) and 78-80 (TRY). NAD(+) is bound at residue Tyr-12. Trp-98 is a binding site for substrate. Residues 113 to 119 (STATQHG) and His-134 each bind FMN. Positions 157–185 (GGAPYGMTTTADGDGSRQPSEQELDGARF) are disordered. Over residues 163 to 177 (MTTTADGDGSRQPSE) the composition is skewed to polar residues.

It belongs to the WrbA family. It depends on FMN as a cofactor.

It carries out the reaction a quinone + NADH + H(+) = a quinol + NAD(+). The catalysed reaction is a quinone + NADPH + H(+) = a quinol + NADP(+). The chain is NAD(P)H dehydrogenase (quinone) from Brucella anthropi (strain ATCC 49188 / DSM 6882 / CCUG 24695 / JCM 21032 / LMG 3331 / NBRC 15819 / NCTC 12168 / Alc 37) (Ochrobactrum anthropi).